The following is a 158-amino-acid chain: Protein shisa-like-2B (158 aa).

A helical membrane pass occupies residues 65 to 85; that stretch reads IGALVGLGIAALVLLAFVISV.

This sequence belongs to the shisa family.

The protein resides in the membrane. This Mus musculus (Mouse) protein is Protein shisa-like-2B (Shisal2b).